The sequence spans 486 residues: Mogroside I-E synthase (486 aa).

The UDP-alpha-D-glucose site is built by Ser302, Cys360, Gln362, Trp380, Asn381, Ser382, Glu385, Asp401, and Gln402.

The protein belongs to the UDP-glycosyltransferase family. As to expression, highly expressed in young fruits 15 days after anthesis (15-DAA).

It carries out the reaction mogrol + UDP-alpha-D-glucose = mogroside IE + UDP + H(+). It catalyses the reaction mogroside I-A1 + UDP-alpha-D-glucose = mogroside IIE + UDP + H(+). The enzyme catalyses mogroside II-A1 + UDP-alpha-D-glucose = mogroside IIIX + UDP + H(+). The catalysed reaction is mogroside II-A + UDP-alpha-D-glucose = mogroside III + UDP + H(+). It participates in secondary metabolite biosynthesis; terpenoid biosynthesis. Its function is as follows. UDP-glycosyltransferase involved in the biosynthesis of cucurbitacin and mogroside tetracyclic triterpene natural products (e.g. siamenoside I and mogrosides IV, V and VI). Cucurbitacins have cytotoxic properties and exhibit deterrent taste as a defense barrier against herbivores. Mogrosides are nonsugar highly oxygenated compounds used as high-intensity zero-calorie sweeteners; they also possess pharmacological properties such as regulating immunity, lowering blood sugar and lipid levels, protecting the liver, and acting as antioxidants and antitumor agents. Catalyzes the C3 primary glucosylation of mogrol, mogroside I-A1, mogroside II-A1 and mogroside II-A. The protein is Mogroside I-E synthase of Siraitia grosvenorii (Monk's fruit).